Here is a 340-residue protein sequence, read N- to C-terminus: Protein RecA (340 aa).

65-72 (GPESGGKT) contacts ATP.

Belongs to the RecA family.

Its subcellular location is the cytoplasm. Can catalyze the hydrolysis of ATP in the presence of single-stranded DNA, the ATP-dependent uptake of single-stranded DNA by duplex DNA, and the ATP-dependent hybridization of homologous single-stranded DNAs. It interacts with LexA causing its activation and leading to its autocatalytic cleavage. The chain is Protein RecA from Thermus thermophilus.